A 286-amino-acid polypeptide reads, in one-letter code: Ribose-phosphate pyrophosphokinase (286 aa).

Residues 34 to 36 and 91 to 92 contribute to the ATP site; these read DGE and RQ. Residues histidine 124 and aspartate 161 each coordinate Mg(2+). Lysine 184 is an active-site residue. D-ribose 5-phosphate is bound by residues arginine 186, aspartate 210, and 214 to 218; that span reads STGGT.

This sequence belongs to the ribose-phosphate pyrophosphokinase family. Class III (archaeal) subfamily. The cofactor is Mg(2+).

It is found in the cytoplasm. It catalyses the reaction D-ribose 5-phosphate + ATP = 5-phospho-alpha-D-ribose 1-diphosphate + AMP + H(+). The protein operates within metabolic intermediate biosynthesis; 5-phospho-alpha-D-ribose 1-diphosphate biosynthesis; 5-phospho-alpha-D-ribose 1-diphosphate from D-ribose 5-phosphate (route I): step 1/1. In terms of biological role, involved in the biosynthesis of the central metabolite phospho-alpha-D-ribosyl-1-pyrophosphate (PRPP) via the transfer of pyrophosphoryl group from ATP to 1-hydroxyl of ribose-5-phosphate (Rib-5-P). The sequence is that of Ribose-phosphate pyrophosphokinase from Thermoplasma acidophilum (strain ATCC 25905 / DSM 1728 / JCM 9062 / NBRC 15155 / AMRC-C165).